A 397-amino-acid chain; its full sequence is Transaldolase (397 aa).

Residue lysine 136 is the Schiff-base intermediate with substrate of the active site.

Belongs to the transaldolase family. Type 1 subfamily. In terms of assembly, homodimer.

The protein localises to the cytoplasm. It catalyses the reaction D-sedoheptulose 7-phosphate + D-glyceraldehyde 3-phosphate = D-erythrose 4-phosphate + beta-D-fructose 6-phosphate. The protein operates within carbohydrate degradation; pentose phosphate pathway; D-glyceraldehyde 3-phosphate and beta-D-fructose 6-phosphate from D-ribose 5-phosphate and D-xylulose 5-phosphate (non-oxidative stage): step 2/3. Its function is as follows. Transaldolase is important for the balance of metabolites in the pentose-phosphate pathway. This is Transaldolase from Synechococcus sp. (strain ATCC 27144 / PCC 6301 / SAUG 1402/1) (Anacystis nidulans).